An 88-amino-acid polypeptide reads, in one-letter code: Putative membrane protein insertion efficiency factor (88 aa).

The protein belongs to the UPF0161 family.

It localises to the cell membrane. In terms of biological role, could be involved in insertion of integral membrane proteins into the membrane. In Exiguobacterium sibiricum (strain DSM 17290 / CCUG 55495 / CIP 109462 / JCM 13490 / 255-15), this protein is Putative membrane protein insertion efficiency factor.